Reading from the N-terminus, the 464-residue chain is Tryprostatin B synthase (464 aa).

Positions 94 and 102 each coordinate brevianamide F. The dimethylallyl diphosphate site is built by Arg-113, Lys-201, and Tyr-203. Tyr-205 serves as a coordination point for brevianamide F. The dimethylallyl diphosphate site is built by Lys-294, Tyr-296, Gln-380, Tyr-382, Tyr-446, and Tyr-450.

It belongs to the tryptophan dimethylallyltransferase family.

It carries out the reaction brevianamide F + dimethylallyl diphosphate = tryprostatin B + diphosphate. Its pathway is mycotoxin biosynthesis. In terms of biological role, brevianamide F prenyltransferase; part of the gene cluster that mediates the biosynthesis of fumitremorgins, indole alkaloids that carry not only intriguing chemical structures, but also interesting biological and pharmacological activities. The biosynthesis of fumitremorgin-type alkaloids begins by condensation of the two amino acids L-tryptophan and L-proline to brevianamide F, catalyzed by the non-ribosomal peptide synthetase ftmA. Brevianamide F is then prenylated by the prenyltransferase ftmPT1/ftmB in the presence of dimethylallyl diphosphate, resulting in the formation of tryprostatin B. The three cytochrome P450 monooxygenases, ftmP450-1/ftmC, ftmP450-2/ftmE and ftmP450-3/FtmG, are responsible for the conversion of tryprostatin B to 6-hydroxytryprostatin B, tryprostatin A to fumitremorgin C and fumitremorgin C to 12,13-dihydroxyfumitremorgin C, respectively. The putative methyltransferase ftmMT/ftmD is expected for the conversion of 6-hydroxytryprostatin B to tryprostatin A. FtmPT2/FtmH catalyzes the prenylation of 12,13-dihydroxyfumitre-morgin C in the presence of dimethylallyl diphosphate, resulting in the formation of fumitremorgin B. Fumitremorgin B is further converted to verruculogen by ftmOx1/ftmF via the insertion of an endoperoxide bond between the two prenyl moieties. In some fungal species, verruculogen is further converted to fumitremorgin A, but the enzymes involved in this step have not been identified yet. This Aspergillus fumigatus (Neosartorya fumigata) protein is Tryprostatin B synthase.